Here is a 1207-residue protein sequence, read N- to C-terminus: DNA-directed RNA polymerase subunit beta' (1207 aa).

Cys-60, Cys-62, Cys-75, and Cys-78 together coordinate Zn(2+). 3 residues coordinate Mg(2+): Asp-450, Asp-452, and Asp-454. Zn(2+)-binding residues include Cys-819, Cys-893, Cys-900, and Cys-903.

The protein belongs to the RNA polymerase beta' chain family. The RNAP catalytic core consists of 2 alpha, 1 beta, 1 beta' and 1 omega subunit. When a sigma factor is associated with the core the holoenzyme is formed, which can initiate transcription. It depends on Mg(2+) as a cofactor. Zn(2+) serves as cofactor.

It catalyses the reaction RNA(n) + a ribonucleoside 5'-triphosphate = RNA(n+1) + diphosphate. Its function is as follows. DNA-dependent RNA polymerase catalyzes the transcription of DNA into RNA using the four ribonucleoside triphosphates as substrates. The chain is DNA-directed RNA polymerase subunit beta' from Streptococcus pyogenes serotype M3 (strain SSI-1).